The chain runs to 507 residues: Protein phosphatase 1J (507 aa).

2 disordered regions span residues 1–102 (MLNR…RLPW) and 197–220 (LCLPSTPGTPGAPSPSQLVSPQSC). The span at 14-23 (SSGGTSSQRS) shows a compositional bias: low complexity. Position 41 is a phosphothreonine (Thr41). Residues 59 to 73 (TAETTVSFSRPTFLQ) are compositionally biased toward polar residues. Residues Ser65 and Ser75 each carry the phosphoserine modification. In terms of domain architecture, PPM-type phosphatase spans 103-499 (STGYAEVINA…DDISVFVIPL (397 aa)). A compositionally biased stretch (low complexity) spans 199 to 212 (LPSTPGTPGAPSPS).

This sequence belongs to the PP2C family. Interacts with UBE2I/UBC9. In terms of tissue distribution, specifically expressed in the testicular germ cells.

The enzyme catalyses O-phospho-L-seryl-[protein] + H2O = L-seryl-[protein] + phosphate. The catalysed reaction is O-phospho-L-threonyl-[protein] + H2O = L-threonyl-[protein] + phosphate. The sequence is that of Protein phosphatase 1J (Ppm1j) from Mus musculus (Mouse).